The following is a 314-amino-acid chain: uncharacterized protein (314 aa).

Transmembrane regions (helical) follow at residues 23-43 (LALG…MALF) and 98-118 (MASG…GPLT). Positions 165-184 (GLGSGAGGGDVGGGGAGGTT) are enriched in gly residues. The tract at residues 165 to 314 (GLGSGAGGGD…APDEKTDAGE (150 aa)) is disordered. Over residues 190–202 (GPPPVPTSSPPTT) the composition is skewed to pro residues. 2 stretches are compositionally biased toward low complexity: residues 203–212 (PAGAPTKSAT) and 219–232 (ASPA…AGMP). The chain crosses the membrane as a helical span at residues 221 to 241 (PASAHMGAAGMPMVPPGAMGA). A compositionally biased stretch (basic and acidic residues) spans 294-314 (LLPEHKDFGRIAPDEKTDAGE).

It is found in the cell membrane. This is an uncharacterized protein from Mycobacterium tuberculosis (strain ATCC 25618 / H37Rv).